The following is a 228-amino-acid chain: Aquaporin Z (228 aa).

2 consecutive transmembrane segments (helical) span residues 1 to 21 (MLNKLSAEFFGTFWLVFGGCG) and 23 to 43 (AILAAAFPELGIGFLGVALAF). The short motif at 63–65 (NPA) is the NPA 1 element. 3 helical membrane-spanning segments follow: residues 82–102 (IPYWVAQVLGAIAAAAILYVI), 129–149 (MMAGLLIEIILTAFFIIIILG), and 154–174 (LAPAGFAPIAIGFGLTLIHLV). The short motif at 184–186 (NPA) is the NPA 2 element. The chain crosses the membrane as a helical span at residues 205-225 (LFWVAPLVGAVIGAIIWKGLL).

The protein belongs to the MIP/aquaporin (TC 1.A.8) family. In terms of assembly, homotetramer.

Its subcellular location is the cell inner membrane. It catalyses the reaction H2O(in) = H2O(out). Functionally, channel that permits osmotically driven movement of water in both directions. It is involved in the osmoregulation and in the maintenance of cell turgor during volume expansion in rapidly growing cells. It mediates rapid entry or exit of water in response to abrupt changes in osmolarity. The polypeptide is Aquaporin Z (Brucella melitensis biotype 1 (strain ATCC 23456 / CCUG 17765 / NCTC 10094 / 16M)).